The following is a 244-amino-acid chain: Probable transcriptional regulatory protein CHY_1525 (244 aa).

Belongs to the TACO1 family.

The protein localises to the cytoplasm. This Carboxydothermus hydrogenoformans (strain ATCC BAA-161 / DSM 6008 / Z-2901) protein is Probable transcriptional regulatory protein CHY_1525.